A 292-amino-acid polypeptide reads, in one-letter code: G1/S-specific cyclin-D3 (292 aa).

In terms of domain architecture, Cyclin N-terminal spans V27–L152. The disordered stretch occupies residues S254–L292. Residues S264 and S279 each carry the phosphoserine modification. A compositionally biased stretch (low complexity) spans G272–T285. T283 is modified (phosphothreonine).

It belongs to the cyclin family. Cyclin D subfamily. As to quaternary structure, interacts with the CDK4 and CDK6 protein kinases to form a serine/threonine kinase holoenzyme complex. The cyclin subunit imparts substrate specificity to the complex. Interacts with ATF5. Interacts with EIF3K. Component of the ternary complex cyclin D/CDK4/CDKN1B required for nuclear translocation and modulation of CDK4-mediated kinase activity. Can form similar complexes with either CDKN1A or CDKN2A. Post-translationally, phosphorylation at Thr-283 by MAP kinases is required for ubiquitination and degradation by the DCX(AMBRA1) complex. In terms of processing, ubiquitinated by the DCX(AMBRA1) complex during the transition from G1 to S cell phase, leading to its degradation: ubiquitination is dependent on Thr-283 phosphorylation. The DCX(AMBRA1) complex represents the major regulator of CCND3 stability during the G1/S transition. Polyubiquitinated by the SCF(FBXL2) complex, leading to proteasomal degradation.

The protein resides in the nucleus. It localises to the cytoplasm. In terms of biological role, regulatory component of the cyclin D3-CDK4 (DC) complex that phosphorylates and inhibits members of the retinoblastoma (RB) protein family including RB1 and regulates the cell-cycle during G(1)/S transition. Phosphorylation of RB1 allows dissociation of the transcription factor E2F from the RB/E2F complex and the subsequent transcription of E2F target genes which are responsible for the progression through the G(1) phase. Hypophosphorylates RB1 in early G(1) phase. Cyclin D-CDK4 complexes are major integrators of various mitogenenic and antimitogenic signals. Component of the ternary complex, cyclin D3/CDK4/CDKN1B, required for nuclear translocation and activity of the cyclin D-CDK4 complex. Shows transcriptional coactivator activity with ATF5 independently of CDK4. This Homo sapiens (Human) protein is G1/S-specific cyclin-D3.